Here is a 437-residue protein sequence, read N- to C-terminus: Enolase (437 aa).

Position 162 (Q162) interacts with (2R)-2-phosphoglycerate. The active-site Proton donor is the E204. Mg(2+)-binding residues include D251, E297, and D324. 4 residues coordinate (2R)-2-phosphoglycerate: K349, R378, S379, and K400. The Proton acceptor role is filled by K349.

Belongs to the enolase family. Mg(2+) is required as a cofactor.

Its subcellular location is the cytoplasm. The protein localises to the secreted. It localises to the cell surface. The catalysed reaction is (2R)-2-phosphoglycerate = phosphoenolpyruvate + H2O. It functions in the pathway carbohydrate degradation; glycolysis; pyruvate from D-glyceraldehyde 3-phosphate: step 4/5. Functionally, catalyzes the reversible conversion of 2-phosphoglycerate (2-PG) into phosphoenolpyruvate (PEP). It is essential for the degradation of carbohydrates via glycolysis. This chain is Enolase, found in Chlorobium chlorochromatii (strain CaD3).